A 276-amino-acid chain; its full sequence is Formamidopyrimidine-DNA glycosylase (276 aa).

The active-site Schiff-base intermediate with DNA is the Pro-2. Glu-3 acts as the Proton donor in catalysis. Lys-58 acts as the Proton donor; for beta-elimination activity in catalysis. Residues His-92, Arg-111, and Arg-153 each contribute to the DNA site. The FPG-type zinc-finger motif lies at 238–272 (TVYGRERQNCLNCSSTIIKTKHSGRSTFYCRTCQY). The Proton donor; for delta-elimination activity role is filled by Arg-262.

This sequence belongs to the FPG family. As to quaternary structure, monomer. It depends on Zn(2+) as a cofactor.

It catalyses the reaction Hydrolysis of DNA containing ring-opened 7-methylguanine residues, releasing 2,6-diamino-4-hydroxy-5-(N-methyl)formamidopyrimidine.. The catalysed reaction is 2'-deoxyribonucleotide-(2'-deoxyribose 5'-phosphate)-2'-deoxyribonucleotide-DNA = a 3'-end 2'-deoxyribonucleotide-(2,3-dehydro-2,3-deoxyribose 5'-phosphate)-DNA + a 5'-end 5'-phospho-2'-deoxyribonucleoside-DNA + H(+). In terms of biological role, involved in base excision repair of DNA damaged by oxidation or by mutagenic agents. Acts as a DNA glycosylase that recognizes and removes damaged bases. Has a preference for oxidized purines, such as 7,8-dihydro-8-oxoguanine (8-oxoG). Has AP (apurinic/apyrimidinic) lyase activity and introduces nicks in the DNA strand. Cleaves the DNA backbone by beta-delta elimination to generate a single-strand break at the site of the removed base with both 3'- and 5'-phosphates. The polypeptide is Formamidopyrimidine-DNA glycosylase (Rickettsia felis (strain ATCC VR-1525 / URRWXCal2) (Rickettsia azadi)).